We begin with the raw amino-acid sequence, 781 residues long: Molybdenum cofactor sulfurase (781 aa).

N6-(pyridoxal phosphate)lysine is present on K246. The active site involves C413. Residues 635–781 form the MOSC domain; sequence LRLLRQSGQR…MTCGDVVLVE (147 aa). The residue at position 734 (S734) is a Phosphoserine.

This sequence belongs to the class-V pyridoxal-phosphate-dependent aminotransferase family. MOCOS subfamily. Pyridoxal 5'-phosphate is required as a cofactor.

It carries out the reaction Mo-molybdopterin + L-cysteine + AH2 = thio-Mo-molybdopterin + L-alanine + A + H2O. Its pathway is cofactor biosynthesis; molybdopterin biosynthesis. Functionally, sulfurates the molybdenum cofactor. Sulfation of molybdenum is essential for xanthine dehydrogenase (XDH) and aldehyde oxidase (ADO) enzymes in which molybdenum cofactor is liganded by 1 oxygen and 1 sulfur atom in active form. The polypeptide is Molybdenum cofactor sulfurase (Drosophila melanogaster (Fruit fly)).